A 506-amino-acid polypeptide reads, in one-letter code: Probable malate:quinone oxidoreductase (506 aa).

This sequence belongs to the MQO family. The cofactor is FAD.

The catalysed reaction is (S)-malate + a quinone = a quinol + oxaloacetate. Its pathway is carbohydrate metabolism; tricarboxylic acid cycle; oxaloacetate from (S)-malate (quinone route): step 1/1. This chain is Probable malate:quinone oxidoreductase, found in Rhodococcus jostii (strain RHA1).